Here is a 360-residue protein sequence, read N- to C-terminus: Histidinol-phosphate aminotransferase (360 aa).

An N6-(pyridoxal phosphate)lysine modification is found at K223.

Belongs to the class-II pyridoxal-phosphate-dependent aminotransferase family. Histidinol-phosphate aminotransferase subfamily. As to quaternary structure, homodimer. Requires pyridoxal 5'-phosphate as cofactor.

It catalyses the reaction L-histidinol phosphate + 2-oxoglutarate = 3-(imidazol-4-yl)-2-oxopropyl phosphate + L-glutamate. The protein operates within amino-acid biosynthesis; L-histidine biosynthesis; L-histidine from 5-phospho-alpha-D-ribose 1-diphosphate: step 7/9. This is Histidinol-phosphate aminotransferase from Bacillus velezensis (strain DSM 23117 / BGSC 10A6 / LMG 26770 / FZB42) (Bacillus amyloliquefaciens subsp. plantarum).